The following is a 236-amino-acid chain: 2-C-methyl-D-erythritol 4-phosphate cytidylyltransferase (236 aa).

This sequence belongs to the IspD/TarI cytidylyltransferase family. IspD subfamily. Homodimer.

It carries out the reaction 2-C-methyl-D-erythritol 4-phosphate + CTP + H(+) = 4-CDP-2-C-methyl-D-erythritol + diphosphate. Its pathway is isoprenoid biosynthesis; isopentenyl diphosphate biosynthesis via DXP pathway; isopentenyl diphosphate from 1-deoxy-D-xylulose 5-phosphate: step 2/6. Catalyzes the formation of 4-diphosphocytidyl-2-C-methyl-D-erythritol from CTP and 2-C-methyl-D-erythritol 4-phosphate (MEP). The sequence is that of 2-C-methyl-D-erythritol 4-phosphate cytidylyltransferase from Salmonella agona (strain SL483).